The following is a 546-amino-acid chain: Oncoprotein-induced transcript 3 protein (546 aa).

Positions 1–16 are cleaved as a signal peptide; it reads MPLSLLLACLFTTVTL. Asn-89 and Asn-116 each carry an N-linked (GlcNAc...) asparagine glycan. Positions 182 to 222 constitute an EGF-like; calcium-binding domain; it reads DENECEHNNGGCSEICVNLKNSHRCACGVGRVLRSDGKTCE. 3 disulfide bridges follow: Cys-186-Cys-197, Cys-193-Cys-206, and Cys-208-Cys-221. Positions 261 to 516 constitute a ZP domain; sequence TCQVPVLCKS…SRCAQGCHRR (256 aa). Asn-299 carries N-linked (GlcNAc...) asparagine glycosylation. Positions 524–546 are disordered; that stretch reads DEDSAGLQSQTLTGGPISIDWEE.

The protein resides in the nucleus envelope. May be involved in hepatocellular function and development. In Rattus norvegicus (Rat), this protein is Oncoprotein-induced transcript 3 protein (Oit3).